Reading from the N-terminus, the 367-residue chain is 3-isopropylmalate dehydrogenase (367 aa).

80–93 serves as a coordination point for NAD(+); the sequence is GKEWTHLPADEQPE. Positions 101, 111, 140, and 230 each coordinate substrate. Mg(2+) contacts are provided by D230, D254, and D258. 288 to 300 lines the NAD(+) pocket; that stretch reads GSAPDLKGKNIAN.

This sequence belongs to the isocitrate and isopropylmalate dehydrogenases family. LeuB type 1 subfamily. Homodimer. It depends on Mg(2+) as a cofactor. The cofactor is Mn(2+).

The protein resides in the cytoplasm. The catalysed reaction is (2R,3S)-3-isopropylmalate + NAD(+) = 4-methyl-2-oxopentanoate + CO2 + NADH. It participates in amino-acid biosynthesis; L-leucine biosynthesis; L-leucine from 3-methyl-2-oxobutanoate: step 3/4. Its function is as follows. Catalyzes the oxidation of 3-carboxy-2-hydroxy-4-methylpentanoate (3-isopropylmalate) to 3-carboxy-4-methyl-2-oxopentanoate. The product decarboxylates to 4-methyl-2 oxopentanoate. This is 3-isopropylmalate dehydrogenase (leuB) from Buchnera aphidicola subsp. Cinara cedri (strain Cc).